Reading from the N-terminus, the 218-residue chain is MALGFFCLAIFLYLSLDPDSGYTSASAAASGKEGVEITYGSAIKLMHEKTKFRLHSHDVPYGSGSGQQSVTGFPGVVDSNSYWIVKPVPGTTEKQGDAVKSGATIRLQHMKTRKWLHSHLHASPISGNLEVSCFGDDTNSDTGDHWKLIIEGSGKTWKQDQRVRLQHIDTSGYLHSHDKKYQRIAGGQQEVCGIREKKADNIWLAAEGVYLPLNESSK.

The N-terminal stretch at 1-21 is a signal peptide; sequence MALGFFCLAIFLYLSLDPDSG. MIR domains lie at 34–88, 96–151, and 154–208; these read GVEI…VKPV, GDAV…LIIE, and GKTW…AAEG. Asn214 is a glycosylation site (N-linked (GlcNAc...) asparagine).

In terms of assembly, interacts with ERDJ3B.

It localises to the endoplasmic reticulum. Involved in the endoplasmic reticulum (ER) protein quality control and unfolded protein response. May be involved in the quality control of glycoproteins. Forms a complex in the ER with ERDJ3B and MED37A/BIP1 which is required for the proper accumulation and function of the surface-exposed leucine-rich repeat receptor kinases EFR involved in pathogen-associated molecular pattern (PAMP) triggered immunity. In Arabidopsis thaliana (Mouse-ear cress), this protein is Stromal cell-derived factor 2-like protein (SDF2).